A 398-amino-acid chain; its full sequence is Phosphoglycerate kinase (398 aa).

Substrate is bound by residues 21 to 23 (DFN), arginine 36, 59 to 62 (HLGR), arginine 119, and arginine 157. Residues lysine 208, glycine 296, glutamate 327, and 354–357 (GGDS) each bind ATP.

Belongs to the phosphoglycerate kinase family. As to quaternary structure, monomer.

The protein resides in the cytoplasm. The enzyme catalyses (2R)-3-phosphoglycerate + ATP = (2R)-3-phospho-glyceroyl phosphate + ADP. The protein operates within carbohydrate degradation; glycolysis; pyruvate from D-glyceraldehyde 3-phosphate: step 2/5. The polypeptide is Phosphoglycerate kinase (pgk) (Lactococcus lactis subsp. lactis (strain IL1403) (Streptococcus lactis)).